A 288-amino-acid polypeptide reads, in one-letter code: Protease HtpX (288 aa).

Helical transmembrane passes span 5 to 25 (IALF…VMSL) and 34 to 54 (SGLL…SLLL). His-140 provides a ligand contact to Zn(2+). Glu-141 is a catalytic residue. His-144 is a Zn(2+) binding site. The next 2 membrane-spanning stretches (helical) occupy residues 155–175 (LLQG…GGII) and 190–210 (FAYF…ATMI). Glu-219 is a binding site for Zn(2+).

It belongs to the peptidase M48B family. Zn(2+) is required as a cofactor.

Its subcellular location is the cell inner membrane. In Stenotrophomonas maltophilia (strain R551-3), this protein is Protease HtpX.